The following is a 439-amino-acid chain: Branched-chain amino acid permease BrnQ (439 aa).

At 1–9 (MTHQLKSRD) the chain is on the cytoplasmic side. Residues 10 to 30 (IIALGFMTFALFVGAGNIIFP) traverse the membrane as a helical segment. The Periplasmic segment spans residues 31-43 (PMVGLQAGEHVWT). The chain crosses the membrane as a helical span at residues 44–64 (AAIGFLITAVGLPVLTVVALA). At 65-79 (KVGGGVDSLSTPIGK) the chain is on the cytoplasmic side. Residues 80–100 (VAGLLLATVCYLAVGPLFATP) form a helical membrane-spanning segment. Topologically, residues 101-118 (RTATVSFEVGIAPLTGDS) are periplasmic. The chain crosses the membrane as a helical span at residues 119-139 (AMPLLIYSVVYFAIVILVSLY). The Cytoplasmic portion of the chain corresponds to 140-149 (PGKLLDTVGN). Residues 150 to 170 (FLAPLKIIALVILSVAAIVWP) form a helical membrane-spanning segment. Over 171–189 (AGPISNALDAYQNAAFSNG) the chain is Periplasmic. The chain crosses the membrane as a helical span at residues 190–210 (FVNGYLTMDTLGAMVFGIVIV). At 211–226 (NAARSRGVTEARLLTR) the chain is on the cytoplasmic side. The chain crosses the membrane as a helical span at residues 227-247 (YTVWAGLMAGVGLTLLYLALF). Residues 248–277 (RLGSDSATLVDQSANGAAILHAYVQHTFGG) are Periplasmic-facing. Residues 278–298 (AGSFLLAALIFIACLVTAVGL) traverse the membrane as a helical segment. Over 299-316 (TCACAEFFAQYIPLSYRT) the chain is Cytoplasmic. The helical transmembrane segment at 317–337 (LVFILGGFSMVVSNLGLSHLI) threads the bilayer. Glutamine 338 is a topological domain (periplasmic). The helical transmembrane segment at 339 to 359 (ISIPVLTAIYPPCIALVVLSF) threads the bilayer. Residues 360–369 (TRSWWHNSTR) are Cytoplasmic-facing. A helical transmembrane segment spans residues 370–390 (IIAPAMFISLLFGILDGIKAS). Residues 391-404 (AFGDMLPAWSQRLP) lie on the Periplasmic side of the membrane. A helical transmembrane segment spans residues 405-425 (LAEQGLAWLMPTVVMVILAII). Over 426 to 439 (WDRAAGRQVTSSAH) the chain is Cytoplasmic.

It belongs to the branched chain amino acid transporter family.

Its subcellular location is the cell inner membrane. Functionally, liv-II branched chain amino acid transport system, which transports leucine, valine and isoleucine. In Salmonella typhimurium (strain LT2 / SGSC1412 / ATCC 700720), this protein is Branched-chain amino acid permease BrnQ.